The chain runs to 558 residues: Membrane transporter D2 (558 aa).

Residues 1–28 are disordered; the sequence is MTLKKRSSAPELPTSLDEDEEEDSPQPL. The Cytoplasmic segment spans residues 1–38; that stretch reads MTLKKRSSAPELPTSLDEDEEEDSPQPLSNTPFFSMKN. A helical membrane pass occupies residues 39-59; sequence LIVATPIILTPLLYGYNLGFV. Topologically, residues 60 to 152 are extracellular; that stretch reads GPYSTMYGYA…QVGYSSIQSG (93 aa). The chain crosses the membrane as a helical span at residues 153–173; sequence VFAGSLVIGSTMGALMGGYLT. Residues 174–179 are Cytoplasmic-facing; the sequence is KRLDYC. Residues 180–200 traverse the membrane as a helical segment; it reads KSFLFIGLLSVIGNVLTHVAT. Over 201-204 the chain is Extracellular; sequence GLFH. The chain crosses the membrane as a helical span at residues 205-225; that stretch reads YWVLFVARIVLGFPLGWQSIT. At 226–241 the chain is on the cytoplasmic side; sequence SSHYTDKFAPANHAKT. Residues 242–262 traverse the membrane as a helical segment; sequence LGTLFQVSVSTGIFVTSFFGL. Residues 263–281 are Extracellular-facing; that stretch reads VLGNTIQYDAASNANTMGR. Residues 282 to 302 traverse the membrane as a helical segment; sequence MQGLVSVSTLLSIFVVFLPLI. Over 303 to 335 the chain is Cytoplasmic; that stretch reads TKDGYSKSRRGDYEGENSEDASRKAAEEYTMTQ. The chain crosses the membrane as a helical span at residues 336–356; it reads MIGPILNGVAMGCVTQLTGIN. Residues 357-373 are Extracellular-facing; the sequence is ANMNFAPTIMSNLGLQP. A helical membrane pass occupies residues 374 to 394; the sequence is LVGNIIVMAWNMLATFCVIPL. Topologically, residues 395–402 are cytoplasmic; it reads SRRFSMRT. A helical membrane pass occupies residues 403–423; sequence LFLFCGFVGSLCCVFLGGIPV. Topologically, residues 424–441 are extracellular; it reads YPGVTKSDKAISGIAITG. Residues 442–463 traverse the membrane as a helical segment; sequence IAIFIALYEMGVGPCFYVLAVD. Over 464-478 the chain is Cytoplasmic; that stretch reads VFPESFRPIGSSITV. The chain crosses the membrane as a helical span at residues 479 to 499; the sequence is GVMFIFNLIINICYPIATEGI. Residues 500–512 are Extracellular-facing; it reads SGGPSGNPNKGQA. Residues 513-533 form a helical membrane-spanning segment; it reads VAFIFFGCIGVVACVIEYFFL. Residues 534-558 lie on the Cytoplasmic side of the membrane; it reads QPWVEPEAKMTDDLDGAAVPEGKHD.

This sequence belongs to the major facilitator superfamily. Sugar transporter (TC 2.A.1.1) family.

Its subcellular location is the membrane. This is Membrane transporter D2 from Leishmania donovani.